The sequence spans 166 residues: MILEPDTVIDLFLQPGGFYWGKGNIRIRTLLGSCVSICFWHPSLLYGGMAHVMLPFRPSSIHSDDSLNAKYAEDAFQLFFEKLEGFKKQYQIKLFGGASMFSTEEEKLLELKSVRDIGMKNILSIKEHLIRNQLLISSEDLGGFSHRRIFFSLWDGEIYVERPEHT.

This sequence belongs to the CheD family.

It catalyses the reaction L-glutaminyl-[protein] + H2O = L-glutamyl-[protein] + NH4(+). Functionally, probably deamidates glutamine residues to glutamate on methyl-accepting chemotaxis receptors (MCPs), playing an important role in chemotaxis. This is Probable chemoreceptor glutamine deamidase CheD 1 from Leptospira interrogans serogroup Icterohaemorrhagiae serovar copenhageni (strain Fiocruz L1-130).